Here is a 109-residue protein sequence, read N- to C-terminus: Tetracenomycin F2 cyclase (109 aa).

In terms of assembly, homodimer.

It carries out the reaction tetracenomycin F2 + H(+) = tetracenomycin F1 + H2O. It participates in antibiotic biosynthesis; tetracenomycin C biosynthesis. Functionally, catalyzing the conversion of tetracenomycin F2 to tetracenomycin F1. This is Tetracenomycin F2 cyclase (tcmI) from Streptomyces glaucescens.